The primary structure comprises 122 residues: Acidic phospholipase A2 (122 aa).

7 disulfide bridges follow: C26–C115, C28–C44, C43–C95, C49–C122, C50–C88, C57–C81, and C75–C86. Residues Y27, G29, and G31 each coordinate Ca(2+). The active site involves H47. D48 contributes to the Ca(2+) binding site. The active site involves D89.

This sequence belongs to the phospholipase A2 family. Group II subfamily. D49 sub-subfamily. As to quaternary structure, monomer. Requires Ca(2+) as cofactor. As to expression, expressed by the venom gland.

The protein localises to the secreted. The enzyme catalyses a 1,2-diacyl-sn-glycero-3-phosphocholine + H2O = a 1-acyl-sn-glycero-3-phosphocholine + a fatty acid + H(+). Functionally, PLA2 catalyzes the calcium-dependent hydrolysis of the 2-acyl groups in 3-sn-phosphoglycerides. This is Acidic phospholipase A2 from Gloydius blomhoffii (Mamushi).